A 324-amino-acid polypeptide reads, in one-letter code: Probable UDP-sugar transporter protein SLC35A4 (324 aa).

Topologically, residues 1 to 18 are cytoplasmic; sequence MSVEDGGVPGLARPRQAR. Residues 19-39 traverse the membrane as a helical segment; sequence WTLLLFLSTAMYGAHAPFLAL. The Lumenal portion of the chain corresponds to 40–52; it reads CHVDGRVPFRPSS. A helical transmembrane segment spans residues 53-73; it reads AVLLTELTKLLLCAFSLLVGW. Topologically, residues 74 to 85 are cytoplasmic; sequence QTWPQGTPPWRQ. Residues 86 to 106 form a helical membrane-spanning segment; the sequence is AVPFALSALLYGANNNLVIYL. Residues 107–142 are Lumenal-facing; that stretch reads QRYMDPSTYQVLSNLKIGSTALLYCLCLGHRLSARQ. Residues 143–163 form a helical membrane-spanning segment; it reads GLALLLLMAAGACYASGGFQE. The Cytoplasmic portion of the chain corresponds to 164-180; that stretch reads PVNTLPGPASAAGAHPM. The chain crosses the membrane as a helical span at residues 181 to 201; sequence PLHITPLGLLLLILYCLISGL. Topologically, residues 202-214 are lumenal; it reads SSVYTELIMKRQR. A helical membrane pass occupies residues 215–235; it reads LPLALQNLFLYTFGVILNFGL. The Cytoplasmic portion of the chain corresponds to 236–248; sequence YAGSGPGPGFLEG. Residues 249–271 traverse the membrane as a helical segment; the sequence is FSGWAVLVVLNQAVNGLLMSAVM. At 272-279 the chain is on the lumenal side; that stretch reads KHGSSITR. The chain crosses the membrane as a helical span at residues 280–300; the sequence is LFIVSCSLVVNAVLSAVLLQL. The Cytoplasmic segment spans residues 301 to 324; the sequence is QLTAIFFLAALLIGLAVCLYYGSP.

The protein belongs to the nucleotide-sugar transporter family. SLC35A subfamily. As to quaternary structure, found in a complex with SLC35A2 and SLC35A3.

It localises to the golgi apparatus membrane. It carries out the reaction CDP-L-ribitol(in) + CDP(out) = CDP-L-ribitol(out) + CDP(in). Functionally, mediates the transport of CDP-ribitol. Does not exhibit CMP-sialic acid, UDP-galactose and UDP-N-acetylglucosamine transport activity. The sequence is that of Probable UDP-sugar transporter protein SLC35A4 from Mus musculus (Mouse).